A 578-amino-acid chain; its full sequence is Acyl-CoA ligase AKT1 (578 aa).

Residues 210–218 (SSGTSGAQK), 350–355 (QCYGAT), Asp438, Arg457, and Lys554 contribute to the ATP site. Residues 281 to 350 (DVEDLLSIVE…RHHPTWKTKQ (70 aa)) are SBD1. Residues 351-413 (CYGATEAGTA…VSSPSLAIGY (63 aa)) form an SBD2 region. The short motif at 576–578 (SKI) is the Peroxisomal targeting signal type 1 element.

The protein localises to the peroxisome. Its pathway is mycotoxin biosynthesis. Its function is as follows. Acyl-CoA ligase; part of the gene clusters that mediate the biosynthesis of the host-selective toxins (HSTs) AK-toxins responsible for Japanese pear black spot disease by the Japanese pear pathotype. AK-toxins are esters of 9,10-epoxy 8-hydroxy 9-methyldecatrienoic acid (EDA). On cellular level, AK-toxins affect plasma membrane of susceptible cells and cause a sudden increase in loss of K(+) after a few minutes of toxin treatment. The acyl-CoA ligase AKT1, the hydrolase AKT2 and enoyl-CoA hydratase AKT3 are all involved in the biosynthesis of the AK-, AF- and ACT-toxin common 9,10-epoxy-8-hydroxy-9-methyl-decatrienoic acid (EDA) structural moiety. Part of the EDA biosynthesis occurs in the peroxisome since these 3 enzymes are localized in peroxisomes. The exact roles of the 3 enzymes, as well as of additional AK-toxin clusters enzymes, including AKT4, AKT6 and AKTS1, have still to be elucidated. The Cytochrome P450 monooxygenase AKT7 on the other side functions to limit production of EDA and AK-toxin, probably via the catalysis of a side reaction of EDA or its precursor. This is Acyl-CoA ligase AKT1 from Alternaria alternata (Alternaria rot fungus).